Reading from the N-terminus, the 34-residue chain is MEVNILAFIATTLFVLVPTAFLLIIYVKTVSQSD.

A helical transmembrane segment spans residues 5-25 (ILAFIATTLFVLVPTAFLLII).

This sequence belongs to the PsbM family. As to quaternary structure, PSII is composed of 1 copy each of membrane proteins PsbA, PsbB, PsbC, PsbD, PsbE, PsbF, PsbH, PsbI, PsbJ, PsbK, PsbL, PsbM, PsbT, PsbX, PsbY, PsbZ, Psb30/Ycf12, at least 3 peripheral proteins of the oxygen-evolving complex and a large number of cofactors. It forms dimeric complexes.

The protein resides in the plastid. It is found in the chloroplast thylakoid membrane. Functionally, one of the components of the core complex of photosystem II (PSII). PSII is a light-driven water:plastoquinone oxidoreductase that uses light energy to abstract electrons from H(2)O, generating O(2) and a proton gradient subsequently used for ATP formation. It consists of a core antenna complex that captures photons, and an electron transfer chain that converts photonic excitation into a charge separation. This subunit is found at the monomer-monomer interface. The chain is Photosystem II reaction center protein M from Citrus sinensis (Sweet orange).